The primary structure comprises 322 residues: Interferon regulatory factor 1 (322 aa).

Positions 5–113 (RMRMRPWLEM…SAVRVYRMLP (109 aa)) form a DNA-binding region, IRF tryptophan pentad repeat. K78 is subject to N6-acetyllysine. The disordered stretch occupies residues 92 to 164 (EEVKDQSRNK…STLPDDHSSY (73 aa)). The span at 141–157 (GESSPDTFSDGLSSSTL) shows a compositional bias: polar residues. Residues K276 and K296 each participate in a glycyl lysine isopeptide (Lys-Gly) (interchain with G-Cter in SUMO) cross-link.

It belongs to the IRF family. As to quaternary structure, monomer. Homodimer. Interacts with EP300. Interacts with MYD88. Interacts with PIAS3. Interacts with SPOP. Phosphorylated by CK2 and this positively regulates its activity. In terms of processing, sumoylation represses the transcriptional activity and displays enhanced resistance to protein degradation. Sumoylated by UBE2I/UBC9 and SUMO1. Inactivates the tumor suppressor activity. Elevated levels in tumor cells. Major site is Lys-276. Sumoylation is enhanced by PIAS3. Desumoylated by SENP1 in tumor cells and appears to compete with ubiquitination on C-terminal sites. Post-translationally, ubiquitinated in a SPOP-depedent manner. Appears to compete with sumoylation on C-terminal sites.

It is found in the nucleus. It localises to the cytoplasm. Its activity is regulated as follows. Activated by MYD88. Its function is as follows. Transcriptional regulator which displays a remarkable functional diversity in the regulation of cellular responses. Regulates transcription of IFN and IFN-inducible genes, host response to viral and bacterial infections, regulation of many genes expressed during hematopoiesis, inflammation, immune responses and cell proliferation and differentiation, regulation of the cell cycle and induction of growth arrest and programmed cell death following DNA damage. Stimulates both innate and acquired immune responses through the activation of specific target genes and can act as a transcriptional activator and repressor regulating target genes by binding to an interferon-stimulated response element (ISRE) in their promoters. Has an essentail role in IFNG-dependent immunity to mycobacteria. Binds to a consensus sequence in gene promoters. Its target genes for transcriptional activation activity include: genes involved in anti-viral response, such as IFN-alpha/beta, RIGI, TNFSF10/TRAIL, ZBP1, OAS1/2, PIAS1/GBP, EIF2AK2/PKR and RSAD2/viperin; antibacterial response, such as GBP2, GBP5 and NOS2/INOS; anti-proliferative response, such as p53/TP53, LOX and CDKN1A; apoptosis, such as BBC3/PUMA, CASP1, CASP7 and CASP8; immune response, such as IL7, IL12A/B and IL15, PTGS2/COX2 and CYBB; DNA damage responses and DNA repair, such as POLQ/POLH; MHC class I expression, such as TAP1, PSMB9/LMP2, PSME1/PA28A, PSME2/PA28B and B2M and MHC class II expression, such as CIITA; metabolic enzymes, such as ACOD1/IRG1. Represses genes involved in anti-proliferative response, such as BIRC5/survivin, CCNB1, CCNE1, CDK1, CDK2 and CDK4 and in immune response, such as FOXP3, IL4, ANXA2 and TLR4. Stimulates p53/TP53-dependent transcription through enhanced recruitment of EP300 leading to increased acetylation of p53/TP53. Plays an important role in immune response directly affecting NK maturation and activity, macrophage production of IL12, Th1 development and maturation of CD8+ T-cells. Also implicated in the differentiation and maturation of dendritic cells and in the suppression of regulatory T (Treg) cells development. Acts as a tumor suppressor and plays a role not only in antagonism of tumor cell growth but also in stimulating an immune response against tumor cells. This Sus scrofa (Pig) protein is Interferon regulatory factor 1 (IRF1).